The chain runs to 1456 residues: Retrovirus-related Pol polyprotein from transposon RE2 (1456 aa).

The segment at 205–252 (NVVTHRNTNTNRNQNNRGDNRNYNNNNNRSNSWQPSSSGSRSDNRQPK) is disordered. Residues 210–245 (RNTNTNRNQNNRGDNRNYNNNNNRSNSWQPSSSGSR) are compositionally biased toward low complexity. The CCHC-type zinc-finger motif lies at 257–273 (RCQICSVQGHSAKRCPQ). The span at 276–291 (QFQSTTNQQQSTSPFT) shows a compositional bias: low complexity. Residues 276–295 (QFQSTTNQQQSTSPFTPWQP) form a disordered region. D313 serves as the catalytic For protease activity. The Integrase catalytic domain maps to 498-661 (TSSKPLEYIY…SPFQKLFGQP (164 aa)). Mg(2+) is bound by residues D509 and D571. Residues 738 to 754 (STSQEQRSDSAPNWPSH) are compositionally biased toward polar residues. The disordered stretch occupies residues 738–896 (STSQEQRSDS…PPLPPVLPAP (159 aa)). Positions 793-814 (SSSNLPSSSISSPSSSEPTAPS) are enriched in low complexity. A compositionally biased stretch (polar residues) spans 816–827 (NGPQPTAQPHQT). Composition is skewed to low complexity over residues 828–841 (QNSN…NNPN) and 849–886 (SPNQ…STST). Positions 887–896 (PPLPPVLPAP) are enriched in pro residues. Residues 965-1208 (NHTWDLVPPP…LTAKPVATPM (244 aa)) form the Reverse transcriptase Ty1/copia-type domain.

It carries out the reaction DNA(n) + a 2'-deoxyribonucleoside 5'-triphosphate = DNA(n+1) + diphosphate. The chain is Retrovirus-related Pol polyprotein from transposon RE2 (RE2) from Arabidopsis thaliana (Mouse-ear cress).